A 287-amino-acid chain; its full sequence is F-actin-capping protein subunit beta (287 aa).

At Ser-2 the chain carries N-acetylserine. Phosphoserine is present on residues Ser-85 and Ser-92.

It belongs to the F-actin-capping protein beta subunit family. Component of the F-actin capping complex, composed of a heterodimer of an alpha and a beta subunit. Interacts with BSP1 (via C-terminus); leading to recruitment of the F-actin capping complex to actin cortical patches and the acomyosin contractile ring.

The protein resides in the cytoplasm. The protein localises to the cytoskeleton. It is found in the actin patch. It localises to the bud. Its subcellular location is the bud tip. Its function is as follows. F-actin-capping proteins bind in a Ca(2+)-independent manner to the fast growing ends of actin filaments (barbed end) thereby blocking the exchange of subunits at these ends. Unlike other capping proteins (such as gelsolin and severin), these proteins do not sever actin filaments. The sequence is that of F-actin-capping protein subunit beta (CAP2) from Saccharomyces cerevisiae (strain ATCC 204508 / S288c) (Baker's yeast).